Here is a 461-residue protein sequence, read N- to C-terminus: GTPase Der (461 aa).

EngA-type G domains are found at residues isoleucine 2 to proline 166 and isoleucine 199 to serine 370. GTP is bound by residues glycine 8–serine 15, aspartate 57–leucine 61, asparagine 118–aspartate 121, glycine 205–serine 212, aspartate 252–isoleucine 256, and asparagine 316–aspartate 319. In terms of domain architecture, KH-like spans lysine 371–glycine 455.

It belongs to the TRAFAC class TrmE-Era-EngA-EngB-Septin-like GTPase superfamily. EngA (Der) GTPase family. As to quaternary structure, associates with the 50S ribosomal subunit.

Its function is as follows. GTPase that plays an essential role in the late steps of ribosome biogenesis. In Nautilia profundicola (strain ATCC BAA-1463 / DSM 18972 / AmH), this protein is GTPase Der.